The sequence spans 117 residues: Ribosome-binding factor A (117 aa).

The protein belongs to the RbfA family. In terms of assembly, monomer. Binds 30S ribosomal subunits, but not 50S ribosomal subunits or 70S ribosomes.

The protein localises to the cytoplasm. One of several proteins that assist in the late maturation steps of the functional core of the 30S ribosomal subunit. Associates with free 30S ribosomal subunits (but not with 30S subunits that are part of 70S ribosomes or polysomes). Required for efficient processing of 16S rRNA. May interact with the 5'-terminal helix region of 16S rRNA. This chain is Ribosome-binding factor A, found in Leptospira borgpetersenii serovar Hardjo-bovis (strain JB197).